Reading from the N-terminus, the 97-residue chain is YcgL domain-containing protein PP_4590 (97 aa).

The YcgL domain occupies 3–87 (RICSIYKSPR…LEDEYIEHLP (85 aa)).

This Pseudomonas putida (strain ATCC 47054 / DSM 6125 / CFBP 8728 / NCIMB 11950 / KT2440) protein is YcgL domain-containing protein PP_4590.